The sequence spans 360 residues: TIMELESS-interacting protein (360 aa).

4 disordered regions span residues 1–80 (MMDP…QRLA), 178–199 (PSEDFSFPDELHVPSPSQPVKV), 220–246 (RMEKMQAQAESQALSQATQSDPNEIPD), and 289–360 (QDVS…KEEY). The segment covering 34 to 48 (ADDEAEDVANGDDWT) has biased composition (acidic residues). Residues 62-71 (PARRVVKRPQ) show a composition bias toward basic residues. The segment at 74-150 (LDGQRLASQR…KEVQTCLKKI (77 aa)) is interaction with TIMELESS. The segment covering 225 to 239 (QAQAESQALSQATQS) has biased composition (low complexity).

The protein belongs to the CSM3 family. Interacts with timeless, which impairs timeless self-association.

Its subcellular location is the cytoplasm. The protein resides in the nucleus. In terms of biological role, plays an important role in the control of DNA replication and the maintenance of replication fork stability. Important for cell survival after DNA damage or replication stress. May be required for the replication checkpoint induced by hydroxyurea or ultraviolet light. The sequence is that of TIMELESS-interacting protein (tipin) from Xenopus laevis (African clawed frog).